A 492-amino-acid chain; its full sequence is Malonate-semialdehyde dehydrogenase (492 aa).

Positions 156, 180, 183, 184, 233, and 255 each coordinate NAD(+). Residue Cys288 is the Nucleophile of the active site. Glu387 provides a ligand contact to NAD(+).

Belongs to the aldehyde dehydrogenase family. IolA subfamily. Homotetramer.

The enzyme catalyses 3-oxopropanoate + NAD(+) + CoA + H2O = hydrogencarbonate + acetyl-CoA + NADH + H(+). It catalyses the reaction 2-methyl-3-oxopropanoate + NAD(+) + CoA + H2O = propanoyl-CoA + hydrogencarbonate + NADH + H(+). It functions in the pathway polyol metabolism; myo-inositol degradation into acetyl-CoA; acetyl-CoA from myo-inositol: step 7/7. Functionally, catalyzes the oxidation of malonate semialdehyde (MSA) and methylmalonate semialdehyde (MMSA) into acetyl-CoA and propanoyl-CoA, respectively. Is involved in a myo-inositol catabolic pathway. Bicarbonate, and not CO2, is the end-product of the enzymatic reaction. The protein is Malonate-semialdehyde dehydrogenase of Lacticaseibacillus casei (Lactobacillus casei).